A 299-amino-acid polypeptide reads, in one-letter code: uncharacterized protein (299 aa).

Residues 1 to 10 show a composition bias toward polar residues; that stretch reads MTSIIQSPPL. 3 disordered regions span residues 1-30, 54-89, and 148-212; these read MTSIIQSPPLNSKKPHLSQDDRINKNNNNN, KLNNNNNNNNNNNNNNNNNNNNNNNNSSSNNNINNN, and QDYT…SDYV. The segment covering 56–89 has biased composition (low complexity); sequence NNNNNNNNNNNNNNNNNNNNNNNNSSSNNNINNN. Composition is skewed to acidic residues over residues 150-169 and 177-212; these read YTDESDNSDEENVDDDDEEE and ECEEEEEEECEEEEEEDSDEDSDDDDSDDSEDSDYV.

This is an uncharacterized protein from Dictyostelium discoideum (Social amoeba).